The sequence spans 130 residues: DNA-directed RNA polymerase subunit omega (130 aa).

The interval 110–130 (EELLKGLEGLAPPEEQPEEDE) is disordered.

The protein belongs to the RNA polymerase subunit omega family. The RNAP catalytic core consists of 2 alpha, 1 beta, 1 beta' and 1 omega subunit. When a sigma factor is associated with the core the holoenzyme is formed, which can initiate transcription.

The catalysed reaction is RNA(n) + a ribonucleoside 5'-triphosphate = RNA(n+1) + diphosphate. In terms of biological role, promotes RNA polymerase assembly. Latches the N- and C-terminal regions of the beta' subunit thereby facilitating its interaction with the beta and alpha subunits. The protein is DNA-directed RNA polymerase subunit omega of Rhodopseudomonas palustris (strain HaA2).